Reading from the N-terminus, the 401-residue chain is Acetate kinase (401 aa).

Asn10 is a binding site for Mg(2+). ATP is bound at residue Lys17. Arg91 is a substrate binding site. Asp150 (proton donor/acceptor) is an active-site residue. ATP-binding positions include 210 to 214, 285 to 287, and 333 to 337; these read HLGNG, DCR, and GIGEN. Glu387 is a binding site for Mg(2+).

Belongs to the acetokinase family. In terms of assembly, homodimer. Mg(2+) is required as a cofactor. The cofactor is Mn(2+).

It is found in the cytoplasm. The enzyme catalyses acetate + ATP = acetyl phosphate + ADP. It participates in metabolic intermediate biosynthesis; acetyl-CoA biosynthesis; acetyl-CoA from acetate: step 1/2. Catalyzes the formation of acetyl phosphate from acetate and ATP. Can also catalyze the reverse reaction. The protein is Acetate kinase of Pasteurella multocida (strain Pm70).